The chain runs to 282 residues: D-alanine aminotransferase (282 aa).

Substrate is bound at residue Tyr-32. Arg-51 is a pyridoxal 5'-phosphate binding site. Positions 99 and 101 each coordinate substrate. Lys-146 (proton acceptor) is an active-site residue. At Lys-146 the chain carries N6-(pyridoxal phosphate)lysine. Pyridoxal 5'-phosphate is bound at residue Glu-178.

It belongs to the class-IV pyridoxal-phosphate-dependent aminotransferase family. As to quaternary structure, homodimer. Requires pyridoxal 5'-phosphate as cofactor.

The catalysed reaction is D-alanine + 2-oxoglutarate = D-glutamate + pyruvate. Acts on the D-isomers of alanine, leucine, aspartate, glutamate, aminobutyrate, norvaline and asparagine. The enzyme transfers an amino group from a substrate D-amino acid to the pyridoxal phosphate cofactor to form pyridoxamine and an alpha-keto acid in the first half-reaction. The second half-reaction is the reverse of the first, transferring the amino group from the pyridoxamine to a second alpha-keto acid to form the product D-amino acid via a ping-pong mechanism. This is an important process in the formation of D-alanine and D-glutamate, which are essential bacterial cell wall components. The chain is D-alanine aminotransferase (dat) from Staphylococcus aureus (strain MW2).